The following is a 67-amino-acid chain: MTKHDHGLKEKVEGAIDKVKGEVKEVVGKVTDNKKLQAEGKWDKVKGTAKDTVGNVKEKVHEYKEHK.

It belongs to the UPF0337 (CsbD) family.

The protein is UPF0337 protein BCE_3655 of Bacillus cereus (strain ATCC 10987 / NRS 248).